Here is a 721-residue protein sequence, read N- to C-terminus: Mitogen-activated protein kinase 6 (721 aa).

Residues 20-316 enclose the Protein kinase domain; that stretch reads YMDLKPLGCG…AEEALSHPYM (297 aa). ATP-binding positions include 26–34 and lysine 49; that span reads LGCGGNGLV. Aspartate 152 acts as the Proton acceptor in catalysis. Threonine 626 bears the Phosphothreonine mark. Residues 626-628 carry the TXY motif; it reads TSY. Tyrosine 628 carries the phosphotyrosine modification.

Belongs to the protein kinase superfamily. CMGC Ser/Thr protein kinase family. MAP kinase subfamily. Mg(2+) is required as a cofactor. Post-translationally, dually phosphorylated on Thr-626 and Tyr-628, which activates the enzyme.

The enzyme catalyses L-seryl-[protein] + ATP = O-phospho-L-seryl-[protein] + ADP + H(+). The catalysed reaction is L-threonyl-[protein] + ATP = O-phospho-L-threonyl-[protein] + ADP + H(+). With respect to regulation, activated by threonine and tyrosine phosphorylation. In terms of biological role, phosphorylates microtubule-associated protein 2 (MAP2). May promote entry in the cell cycle. The protein is Mitogen-activated protein kinase 6 (MAPK6) of Gallus gallus (Chicken).